A 173-amino-acid chain; its full sequence is Photosystem I assembly protein Ycf3 (173 aa).

TPR repeat units follow at residues 35-68 (AYIYYRDGLAAQNNGDYSEALEYYKESLLLEENK), 72-105 (GETLKNMAIIFMSNGEEDLSIETYEKALVENPKQ), and 120-153 (GRNAEQNGDLDQRDIWFDKAAEVWTKAVKLYPGG).

Belongs to the Ycf3 family.

It localises to the cellular thylakoid membrane. Its function is as follows. Essential for the assembly of the photosystem I (PSI) complex. May act as a chaperone-like factor to guide the assembly of the PSI subunits. This Prochlorococcus marinus (strain MIT 9312) protein is Photosystem I assembly protein Ycf3.